The chain runs to 625 residues: MFFDDEFDVIVVGGGHAGTEAALAAARTGARTLLLTQNVETLGQMSCNPAIGGIGKGHLVKEIDAMGGLMARAADRAGIQFRILNASKGPAVRATRAQADRSLYRKAVREGLSAQENLSLFQQTVVDLIVEGRRAAGVVTQMGLKFRSRCVVLTVGTFLAGRIHIGLENYDGGRAGDPPATDLARRLRDLGFKVARLKTGTPPRIDRRSVDFSRMAEQPGDDPTPVFSFLGTREEHPPQVSCYITRTNERTHELIRAGLDRSPMFTGVIEGIGPRYCPSIEDKVVRFAERDSHQIFVEPEGLDSLEIYPNGISTSLPFDVQLAVVRSIQGFEDARITRPGYAIEYDFFDPRDLRHSLETRHMENLFFAGQINGTTGYEEAAAQGLLAGLNAARKARDLEPWWPGRDEAYLGVLVDDLITRGTSEPYRMFTSRAEYRLVLREDNADLRLTETGRALGLVDDARWSAFEAKREAIETLGARLAARRIRPDSSQAESWNALTEIPLQREASLLELLRRPDVGLEHIAGHAPDLFEGMDRAVREQVEIAAKYTGYIERQQAEIERVRRYEAWQLPDSMDYGKVIGLSSEVREKLGRVRPATVGQAARIPGITPAAISLLLVHLRRTGAA.

13 to 18 (GGGHAG) contributes to the FAD binding site. 273–287 (GPRYCPSIEDKVVRF) is an NAD(+) binding site.

This sequence belongs to the MnmG family. Homodimer. Heterotetramer of two MnmE and two MnmG subunits. FAD serves as cofactor.

The protein resides in the cytoplasm. NAD-binding protein involved in the addition of a carboxymethylaminomethyl (cmnm) group at the wobble position (U34) of certain tRNAs, forming tRNA-cmnm(5)s(2)U34. The polypeptide is tRNA uridine 5-carboxymethylaminomethyl modification enzyme MnmG (Methylococcus capsulatus (strain ATCC 33009 / NCIMB 11132 / Bath)).